A 731-amino-acid polypeptide reads, in one-letter code: Gelsolin (731 aa).

The segment at valine 2 to phenylalanine 125 is actin-severing. The Gelsolin-like 1 repeat unit spans residues phenylalanine 25–leucine 107. Tyrosine 35 is modified (phosphotyrosine). Residues glycine 41, aspartate 42, glutamate 73, aspartate 85, glycine 90, and alanine 92 each contribute to the Ca(2+) site. Residues aspartate 72–glycine 75 form an actin-actin interfilament contact point region. Lysine 111 to lysine 118 serves as a coordination point for a 1,2-diacyl-sn-glycero-3-phospho-(1D-myo-inositol-4,5-bisphosphate). Residue valine 121 participates in Ca(2+) binding. Arginine 137–arginine 145 serves as a coordination point for a 1,2-diacyl-sn-glycero-3-phospho-(1D-myo-inositol-4,5-bisphosphate). Residues valine 147–methionine 219 form a Gelsolin-like 2 repeat. Ca(2+) contacts are provided by glycine 162 and aspartate 163. A disulfide bond links cysteine 164 and cysteine 177. Ca(2+) is bound by residues glutamate 185, aspartate 235, glutamate 278, aspartate 279, and glutamate 303. Residues aspartate 266 to phenylalanine 338 form a Gelsolin-like 3 repeat. Phosphotyrosine occurs at positions 358 and 414. Positions alanine 383–alanine 731 are actin-binding, Ca-sensitive. The stretch at serine 404–methionine 485 is one Gelsolin-like 4 repeat. Glycine 420, aspartate 421, glutamate 451, aspartate 463, glycine 468, proline 470, and threonine 500 together coordinate Ca(2+). At lysine 533 the chain carries N6-acetyllysine. The stretch at lysine 533 to tryptophan 591 is one Gelsolin-like 5 repeat. Residues asparagine 540 and aspartate 541 each contribute to the Ca(2+) site. Phosphotyrosine is present on tyrosine 552. Glutamate 563 is a binding site for Ca(2+). Tyrosine 600 carries the post-translational modification Phosphotyrosine. A Gelsolin-like 6 repeat occupies isoleucine 630–phenylalanine 705. Residues aspartate 645, aspartate 646, and glutamate 668 each contribute to the Ca(2+) site. Threonine 691 carries the post-translational modification Phosphothreonine.

Belongs to the villin/gelsolin family. In terms of assembly, binds to actin and to fibronectin. Identified in a complex composed of ACTA1, COBL, GSN and TMSB4X. Interacts with the inactive form of EIF2AK2/PKR. Interacts with FLII.

The protein localises to the cytoplasm. Its subcellular location is the cytoskeleton. In terms of biological role, calcium-regulated, actin-modulating protein that binds to the plus (or barbed) ends of actin monomers or filaments, preventing monomer exchange (end-blocking or capping). It can promote the assembly of monomers into filaments (nucleation) as well as sever filaments already formed. Plays a role in ciliogenesis. This Equus caballus (Horse) protein is Gelsolin (GSN).